Consider the following 184-residue polypeptide: Photosystem I assembly protein Ycf4 (184 aa).

The next 2 helical transmembrane spans lie at 21 to 43 and 58 to 80; these read NFCWAFILLFGALGFFFVGFSSY and LFIPQGIVMCFYGIAGLFISFYL.

Belongs to the Ycf4 family.

It is found in the plastid. The protein localises to the chloroplast thylakoid membrane. In terms of biological role, seems to be required for the assembly of the photosystem I complex. The protein is Photosystem I assembly protein Ycf4 of Marchantia polymorpha (Common liverwort).